Consider the following 339-residue polypeptide: Glyceraldehyde-3-phosphate dehydrogenase (339 aa).

Residues 11 to 12 and Gly-110 contribute to the NAD(+) site; that span reads TI. 139 to 141 lines the D-glyceraldehyde 3-phosphate pocket; that stretch reads SCN. Cys-140 functions as the Nucleophile in the catalytic mechanism. Arg-168 is an NAD(+) binding site. 194–195 is a D-glyceraldehyde 3-phosphate binding site; the sequence is HG. Position 301 (Gln-301) interacts with NAD(+).

The protein belongs to the glyceraldehyde-3-phosphate dehydrogenase family. In terms of assembly, homotetramer.

The protein resides in the cytoplasm. It catalyses the reaction D-glyceraldehyde 3-phosphate + phosphate + NADP(+) = (2R)-3-phospho-glyceroyl phosphate + NADPH + H(+). It carries out the reaction D-glyceraldehyde 3-phosphate + phosphate + NAD(+) = (2R)-3-phospho-glyceroyl phosphate + NADH + H(+). The protein operates within carbohydrate degradation; glycolysis; pyruvate from D-glyceraldehyde 3-phosphate: step 1/5. This chain is Glyceraldehyde-3-phosphate dehydrogenase, found in Methanospirillum hungatei JF-1 (strain ATCC 27890 / DSM 864 / NBRC 100397 / JF-1).